The sequence spans 330 residues: MTRMLPGYFPSPPRGVWHLGPLPIRAYALLIILGIVAALVVGGRCWEARGGERDVTYDIALWAVPFGLVGGRLYHLATDWRTYFGQNGAGLGAALRIWDGGLGIWGAVALGCVGAWLGCRRHRIPLPAFGDALAPGIILAQAIGRLGNYFNQELYGRETTMPWGLEVFYRRDPAGYMDPHSLDGVSTGQLAFVVQPTFLYELIWNVLVFFALIYVDRWFTLGHGRLFATYVAAYCIGRFCVELLRDDAATHIAGIRINSFTSTFVFIGAVVYIILAPKGREEPENLCRAEYVAREIPEPESATERATVASTYATTTAVPVSADEEFAETN.

Helical transmembrane passes span 22–42 (LPIRAYALLIILGIVAALVVG), 57–77 (YDIALWAVPFGLVGGRLYHLA), and 97–117 (IWDGGLGIWGAVALGCVGAWL). R145 is an a 1,2-diacyl-sn-glycero-3-phospho-(1'-sn-glycerol) binding site. 2 helical membrane passes run 193–213 (VVQPTFLYELIWNVLVFFALI) and 257–277 (INSFTSTFVFIGAVVYIILAP).

The protein belongs to the Lgt family.

It localises to the cell membrane. The enzyme catalyses L-cysteinyl-[prolipoprotein] + a 1,2-diacyl-sn-glycero-3-phospho-(1'-sn-glycerol) = an S-1,2-diacyl-sn-glyceryl-L-cysteinyl-[prolipoprotein] + sn-glycerol 1-phosphate + H(+). Its pathway is protein modification; lipoprotein biosynthesis (diacylglyceryl transfer). In terms of biological role, catalyzes the transfer of the diacylglyceryl group from phosphatidylglycerol to the sulfhydryl group of the N-terminal cysteine of a prolipoprotein, the first step in the formation of mature lipoproteins. This Mycobacterium leprae (strain Br4923) protein is Phosphatidylglycerol--prolipoprotein diacylglyceryl transferase.